Reading from the N-terminus, the 408-residue chain is Imidazolonepropionase (408 aa).

Fe(3+) contacts are provided by His73 and His75. Residues His73 and His75 each contribute to the Zn(2+) site. Positions 82, 145, and 178 each coordinate 4-imidazolone-5-propanoate. Tyr145 is a binding site for N-formimidoyl-L-glutamate. Residue His243 coordinates Fe(3+). His243 contributes to the Zn(2+) binding site. Gln246 provides a ligand contact to 4-imidazolone-5-propanoate. Asp318 is a binding site for Fe(3+). A Zn(2+)-binding site is contributed by Asp318. Residues Asn320 and Gly322 each coordinate N-formimidoyl-L-glutamate. Ser323 contacts 4-imidazolone-5-propanoate.

Belongs to the metallo-dependent hydrolases superfamily. HutI family. The cofactor is Zn(2+). It depends on Fe(3+) as a cofactor.

It localises to the cytoplasm. It catalyses the reaction 4-imidazolone-5-propanoate + H2O = N-formimidoyl-L-glutamate. Its pathway is amino-acid degradation; L-histidine degradation into L-glutamate; N-formimidoyl-L-glutamate from L-histidine: step 3/3. Catalyzes the hydrolytic cleavage of the carbon-nitrogen bond in imidazolone-5-propanoate to yield N-formimidoyl-L-glutamate. It is the third step in the universal histidine degradation pathway. This Shewanella sp. (strain ANA-3) protein is Imidazolonepropionase.